The primary structure comprises 447 residues: GTPase Der (447 aa).

EngA-type G domains follow at residues 4-165 and 180-357; these read QIIT…PEEE and LQIV…KIWN. Residues 10–17, 57–61, 119–122, 186–193, 233–237, and 298–301 each bind GTP; these read GRPNVGKS, DTPGL, NKCE, GRPNAGKS, DTAGL, and NKWD. Positions 358-443 constitute a KH-like domain; it reads KKITTSKLNE…PIRFIYVKTK (86 aa).

The protein belongs to the TRAFAC class TrmE-Era-EngA-EngB-Septin-like GTPase superfamily. EngA (Der) GTPase family. In terms of assembly, associates with the 50S ribosomal subunit.

In terms of biological role, GTPase that plays an essential role in the late steps of ribosome biogenesis. This is GTPase Der from Rickettsia conorii (strain ATCC VR-613 / Malish 7).